The primary structure comprises 424 residues: Serine--tRNA ligase (424 aa).

Thr-230–Glu-232 is a binding site for L-serine. Position 261–263 (Arg-261–Glu-263) interacts with ATP. Residue Glu-284 coordinates L-serine. Position 348 to 351 (Glu-348 to Ser-351) interacts with ATP. Ser-384 provides a ligand contact to L-serine.

The protein belongs to the class-II aminoacyl-tRNA synthetase family. Type-1 seryl-tRNA synthetase subfamily. Homodimer. The tRNA molecule binds across the dimer.

It is found in the cytoplasm. The enzyme catalyses tRNA(Ser) + L-serine + ATP = L-seryl-tRNA(Ser) + AMP + diphosphate + H(+). It catalyses the reaction tRNA(Sec) + L-serine + ATP = L-seryl-tRNA(Sec) + AMP + diphosphate + H(+). Its pathway is aminoacyl-tRNA biosynthesis; selenocysteinyl-tRNA(Sec) biosynthesis; L-seryl-tRNA(Sec) from L-serine and tRNA(Sec): step 1/1. Functionally, catalyzes the attachment of serine to tRNA(Ser). Is also able to aminoacylate tRNA(Sec) with serine, to form the misacylated tRNA L-seryl-tRNA(Sec), which will be further converted into selenocysteinyl-tRNA(Sec). The sequence is that of Serine--tRNA ligase from Carboxydothermus hydrogenoformans (strain ATCC BAA-161 / DSM 6008 / Z-2901).